The sequence spans 211 residues: MLEVPVWIPILAFAVGLGLGLLIPHLQKPFQRFSTVNDIPKEFFEHERTLRGKVVSVTDGDTIRVRHVPWLANGDGDFKGKLTETTLQLRVAGVDCPETAKFGRTGQPFGEEAKAWLKGELQDQVVSFKLLMKDQYSRAVCLVYYGSWAAPMNVSEELLRHGYANIYRQSGAVYGGLLETFEALEAEAREKRVNIWSLDKRETPAQYKARK.

An N-terminal signal peptide occupies residues 1–20 (MLEVPVWIPILAFAVGLGLG). Residues 48–51 (RTLR) carry the RxLR motif. A TNase-like domain is found at 48–198 (RTLRGKVVSV…REKRVNIWSL (151 aa)). Aspartate 77 contributes to the Ca(2+) binding site. The active site involves arginine 90. Aspartate 95 is a binding site for Ca(2+). Active-site residues include glutamate 98 and arginine 138. Asparagine 153 is a glycosylation site (N-linked (GlcNAc...) asparagine). The segment at 200–211 (KRETPAQYKARK) is binding to the host cell surface.

This sequence in the N-terminal section; belongs to the RxLR effector family. The protein in the C-terminal section; belongs to the LCL3 family. Interacts with the host cell surface endoplasmin gp96, in order to get translocated into to host cell. Interacts with the effector Htp1, in order to get released from vesicles into the host cytosol.

The protein localises to the secreted. It localises to the host cytoplasm. The protein resides in the host cytosol. The nuclease activity shows a general salt dependency with a clear reduction by magnesium and sulfate ions. In terms of biological role, effector involved in the disease saprolegniosis in salmonids and other freshwater fish, resulting in considerable economic losses in aquaculture. Within the host fish cells, Htp3 is released from vesicles into host cytosol where it degrades nucleic acids. The protein is Endonuclease Htp3 (HTP3) of Saprolegnia parasitica (strain CBS 223.65).